Consider the following 1770-residue polypeptide: Transposon Ty2-OR2 Gag-Pol polyprotein (1770 aa).

Disordered regions lie at residues 1-88 (MESQ…YQQH) and 359-449 (QHSE…SNDE). Polar residues-rich tracts occupy residues 19–39 (ASVT…SASN) and 49–60 (KVNSQEETTPGT). Residues 295–397 (ENNINVSDRL…SSKPRAAKAH (103 aa)) form an RNA-binding region. Positions 369-381 (TSPNTTNTKVTTR) are enriched in low complexity. Composition is skewed to polar residues over residues 399 to 408 (IATSSKFSRV) and 415 to 435 (ESTV…GQQQ). The active-site For protease activity; shared with dimeric partner is the aspartate 457. An integrase-type zinc finger-like region spans residues 579–636 (NVNKSKSVNKYPYPLIHRMLGHANFRSIQKSLKKNAVTYLKESDIEWSNASTYQCPDC). The 176-residue stretch at 656-831 (ESYEPFQYLH…AGLDITTILP (176 aa)) folds into the Integrase catalytic domain. Positions 667 and 732 each coordinate Mg(2+). 4 disordered regions span residues 1005–1038 (GGTI…MIDL), 1057–1135 (GGTE…KSSK), 1146–1165 (LPLP…VSKD), and 1170–1205 (HSRQ…TEIE). 2 stretches are compositionally biased toward polar residues: residues 1009–1024 (ESDT…FTAR) and 1065–1082 (QRNS…STPS). The segment covering 1151 to 1165 (LTHKSPTDTSDVSKD) has biased composition (basic and acidic residues). The Bipartite nuclear localization signal motif lies at 1193-1227 (KKRSLEDNETEIEVSRDTWNNKNMRSLEPPRSKKR). The Reverse transcriptase Ty1/copia-type domain maps to 1353–1491 (NDYYITQLDI…DILGLEIKYQ (139 aa)). 6 residues coordinate Mg(2+): aspartate 1361, aspartate 1442, aspartate 1443, aspartate 1625, glutamate 1667, and aspartate 1700. The RNase H Ty1/copia-type domain occupies 1625–1767 (DASYGNQPYY…IKTFKLLTNK (143 aa)).

In terms of assembly, the capsid protein forms a homotrimer, from which the VLPs are assembled. The protease is a homodimer, whose active site consists of two apposed aspartic acid residues. Initially, virus-like particles (VLPs) are composed of the structural unprocessed proteins Gag and Gag-Pol, and also contain the host initiator methionine tRNA (tRNA(i)-Met) which serves as a primer for minus-strand DNA synthesis, and a dimer of genomic Ty RNA. Processing of the polyproteins occurs within the particle and proceeds by an ordered pathway, called maturation. First, the protease (PR) is released by autocatalytic cleavage of the Gag-Pol polyprotein, and this cleavage is a prerequisite for subsequent processing at the remaining sites to release the mature structural and catalytic proteins. Maturation takes place prior to the RT reaction and is required to produce transposition-competent VLPs.

The protein resides in the cytoplasm. It is found in the nucleus. It catalyses the reaction DNA(n) + a 2'-deoxyribonucleoside 5'-triphosphate = DNA(n+1) + diphosphate. It carries out the reaction Endonucleolytic cleavage to 5'-phosphomonoester.. Its function is as follows. Capsid protein (CA) is the structural component of the virus-like particle (VLP), forming the shell that encapsulates the retrotransposons dimeric RNA genome. The particles are assembled from trimer-clustered units and there are holes in the capsid shells that allow for the diffusion of macromolecules. CA also has nucleocapsid-like chaperone activity, promoting primer tRNA(i)-Met annealing to the multipartite primer-binding site (PBS), dimerization of Ty2 RNA and initiation of reverse transcription. The aspartyl protease (PR) mediates the proteolytic cleavages of the Gag and Gag-Pol polyproteins after assembly of the VLP. Functionally, reverse transcriptase/ribonuclease H (RT) is a multifunctional enzyme that catalyzes the conversion of the retro-elements RNA genome into dsDNA within the VLP. The enzyme displays a DNA polymerase activity that can copy either DNA or RNA templates, and a ribonuclease H (RNase H) activity that cleaves the RNA strand of RNA-DNA heteroduplexes during plus-strand synthesis and hydrolyzes RNA primers. The conversion leads to a linear dsDNA copy of the retrotransposon that includes long terminal repeats (LTRs) at both ends. In terms of biological role, integrase (IN) targets the VLP to the nucleus, where a subparticle preintegration complex (PIC) containing at least integrase and the newly synthesized dsDNA copy of the retrotransposon must transit the nuclear membrane. Once in the nucleus, integrase performs the integration of the dsDNA into the host genome. The protein is Transposon Ty2-OR2 Gag-Pol polyprotein (TY2B-OR2) of Saccharomyces cerevisiae (strain ATCC 204508 / S288c) (Baker's yeast).